A 450-amino-acid polypeptide reads, in one-letter code: Bifunctional protein GlmU (450 aa).

A pyrophosphorylase region spans residues 1–228 (MKTALVILAA…ESETLGINSR (228 aa)). UDP-N-acetyl-alpha-D-glucosamine is bound by residues 8–11 (LAAG), Lys22, Gln75, and 80–81 (GT). Residue Asp105 participates in Mg(2+) binding. 4 residues coordinate UDP-N-acetyl-alpha-D-glucosamine: Gly140, Glu154, Asn169, and Asn226. Asn226 contacts Mg(2+). Residues 229 to 249 (TELSAAEAAFQERARTNAFEN) form a linker region. The tract at residues 250–450 (GVTLPAPGTV…AKKAKQQRGS (201 aa)) is N-acetyltransferase. Arg315 and Lys333 together coordinate UDP-N-acetyl-alpha-D-glucosamine. Catalysis depends on His345, which acts as the Proton acceptor. Residues Tyr348 and Asn359 each coordinate UDP-N-acetyl-alpha-D-glucosamine. Residues Ala362, 368 to 369 (NY), Ser387, Ser405, and Arg422 each bind acetyl-CoA.

In the N-terminal section; belongs to the N-acetylglucosamine-1-phosphate uridyltransferase family. This sequence in the C-terminal section; belongs to the transferase hexapeptide repeat family. Homotrimer. It depends on Mg(2+) as a cofactor.

The protein localises to the cytoplasm. The catalysed reaction is alpha-D-glucosamine 1-phosphate + acetyl-CoA = N-acetyl-alpha-D-glucosamine 1-phosphate + CoA + H(+). The enzyme catalyses N-acetyl-alpha-D-glucosamine 1-phosphate + UTP + H(+) = UDP-N-acetyl-alpha-D-glucosamine + diphosphate. It functions in the pathway nucleotide-sugar biosynthesis; UDP-N-acetyl-alpha-D-glucosamine biosynthesis; N-acetyl-alpha-D-glucosamine 1-phosphate from alpha-D-glucosamine 6-phosphate (route II): step 2/2. The protein operates within nucleotide-sugar biosynthesis; UDP-N-acetyl-alpha-D-glucosamine biosynthesis; UDP-N-acetyl-alpha-D-glucosamine from N-acetyl-alpha-D-glucosamine 1-phosphate: step 1/1. It participates in bacterial outer membrane biogenesis; LPS lipid A biosynthesis. Its function is as follows. Catalyzes the last two sequential reactions in the de novo biosynthetic pathway for UDP-N-acetylglucosamine (UDP-GlcNAc). The C-terminal domain catalyzes the transfer of acetyl group from acetyl coenzyme A to glucosamine-1-phosphate (GlcN-1-P) to produce N-acetylglucosamine-1-phosphate (GlcNAc-1-P), which is converted into UDP-GlcNAc by the transfer of uridine 5-monophosphate (from uridine 5-triphosphate), a reaction catalyzed by the N-terminal domain. The chain is Bifunctional protein GlmU from Roseobacter denitrificans (strain ATCC 33942 / OCh 114) (Erythrobacter sp. (strain OCh 114)).